A 479-amino-acid polypeptide reads, in one-letter code: MAQHTVYFPDAFLTQMREAMPSTLSFDDFLAACQRPLRRSIRVNTLKISVADFLQLTAPYGWTLTPIPWCEEGFWIERDNEDALPLGSTAEHLSGLFYIQEASSMLPVAALFADDNAPQRVMDVAAAPGSKTTQIAARMNNEGAILANEFSASRVKVLHANISRCGISNVALTHFDGRVFGAAVPEMFDAILLDAPCSGEGVVRKDPDALKNWSPESNQEIAATQRELIDSAFHALRPGGTLVYSTCTLNQEENEAVCLWLKETYPDAVEFLPLGDLFPGANKALTEEGFLHVFPQIYDCEGFFVARLRKTQAIPALPAPKYKVGNFPFSPVKDREAGQIRQAAASVGLNWDGNLRLWQRDKELWLFPVGIEALIGKVRFSRLGIKLAETHNKGYRWQHEAVIALATPDNVNAFELTPQEAEEWYRGRDVYPQAAPVADDVLVTFQHQPIGLAKRIGSRLKNSYPRELVRDGKLFTGNA.

S-adenosyl-L-methionine contacts are provided by residues 125–131 (AAAPGSK), Glu-149, Asp-176, and Asp-194. Cys-247 serves as the catalytic Nucleophile.

This sequence belongs to the class I-like SAM-binding methyltransferase superfamily. RsmB/NOP family.

It is found in the cytoplasm. The catalysed reaction is cytidine(1407) in 16S rRNA + S-adenosyl-L-methionine = 5-methylcytidine(1407) in 16S rRNA + S-adenosyl-L-homocysteine + H(+). In terms of biological role, specifically methylates the cytosine at position 1407 (m5C1407) of 16S rRNA. This is Ribosomal RNA small subunit methyltransferase F from Escherichia coli O139:H28 (strain E24377A / ETEC).